Consider the following 610-residue polypeptide: UvrABC system protein C (610 aa).

Positions 16 to 94 (SQPGVYRMYD…IKLYQPRYNV (79 aa)) constitute a GIY-YIG domain. The UVR domain occupies 204 to 239 (DQVLTQLIARMEKASQDLAFEEAARIRDQIQAVRRV).

The protein belongs to the UvrC family. Interacts with UvrB in an incision complex.

The protein localises to the cytoplasm. The UvrABC repair system catalyzes the recognition and processing of DNA lesions. UvrC both incises the 5' and 3' sides of the lesion. The N-terminal half is responsible for the 3' incision and the C-terminal half is responsible for the 5' incision. This chain is UvrABC system protein C, found in Salmonella paratyphi B (strain ATCC BAA-1250 / SPB7).